The primary structure comprises 291 residues: MEMO1 family protein TON_0132 (291 aa).

It belongs to the MEMO1 family.

The polypeptide is MEMO1 family protein TON_0132 (Thermococcus onnurineus (strain NA1)).